A 181-amino-acid chain; its full sequence is Secreted chorismate mutase (181 aa).

The signal sequence occupies residues 1–20; the sequence is MLASVALAALAGVGTPHATA. A Chorismate mutase domain is found at 21–100; that stretch reads DDASPLVPLV…ATSSVEHTRF (80 aa). Substrate-binding positions include Arg36, Lys47, Asp56, 59 to 63, 92 to 96, and Arg121; these read REQQV and TSSVE. Cys147 and Cys180 are joined by a disulfide.

In terms of assembly, homodimer.

The protein resides in the secreted. It catalyses the reaction chorismate = prephenate. Its pathway is metabolic intermediate biosynthesis; prephenate biosynthesis; prephenate from chorismate: step 1/1. Its function is as follows. Catalyzes the Claisen rearrangement of chorismate to prephenate. May play some role in the pathogenicity. The polypeptide is Secreted chorismate mutase (Mycolicibacterium smegmatis (strain ATCC 700084 / mc(2)155) (Mycobacterium smegmatis)).